The following is a 3564-amino-acid chain: MTAWRKFKSLLLPLVLAVLCAGLLTAAKGQNCGGLVQGPNGTIESPGFPHGYPNYANCTWIIITGERNRIQLSFHTFALEEDFDILSVYDGQPQQGNLKVRLSGFQLPSSIVSTGSLLTLWFTTDFAVSAQGFKAMYEVLPSHTCGNPGEILKGVLHGTRFNIGDKIRYSCLSGYILEGHAILTCIVSPGNGASWDFPAPFCRAEGACGGTLRGTSGSISSPHFPSEYDNNADCTWTILAEPGDTIALVFTDFQLEEGYDFLEISGTEAPSIWLTGMNLPSPVISSKNWLRLHFTSDSNHRRKGFNAQFQVKKAIELKSRGVKMLPSKDSSHKNSVLTQGGVSLISDMCPDPGIPDNGRRAGSDFRVGANVQFSCEDNYVLQGAKGITCQRVTETLAAWNDHRPICRARTCGSNLRGPSGVITSPNYPVQYEDNAHCVWVITTTDPDKVIKLAFEEFELERGYDTLTVGDAGKVGDTRSVLYVLTGSSVPDLIVSMSNQMWLHLQSDDSIGSPGFKAVYQEIEKGGCGDPGIPAYGKRTGSSFLHGDTLTFECQAAFELVGERVITCQKNNQWSGNKPSCVFSCFFNFTAPSGIILSPNYPEEYGNNMNCVWLIISEPGSRIHLIFNDFDVEPQFDFLAVKDDGISDITVLGTFSGNEVPAQLASSGHIVRLEFQSDHSTTGRGFNITYTTFGQNECHDPGIPVNGRRFGDRFLLGSSVSFHCDDGFVKTQGSESITCILQDGNVVWSSTVPRCEAPCGGHLTASSGVILPPGWPGYYKDSLNCEWVIEAKPGHSIKITFDRFQTEVNYDTLEVRDGPTSSSPLIGEYHGTQAPQFLISTGNYMYLLFTTDSSRASVGFLIHYESVTLESDSCLDPGIPVNGQRHGSNFGIRSTVTFSCDPGYTLSDDEPLVCEKNHQWNHALPSCDALCGGYIHGKSGTVLSPGFPDFYPNSLNCTWTIEVSHGKGVQMNFHTFHLESSHDYLLITEDGSFSEPVARLTGSVLPHTIKAGLFGNFTAQLRFISDFSISYEGFNITFAEYDLEPCDDPGVPAFSRRIGFQFGVGDTLAFTCFQGYRLEGATKLTCLGGGRRVWSAPLPRCVAECGASVKGNEGTLLSPNFPSHYDNNHECIYKIETEAGKGIHLRARTFQLFEGDTLKVYDGKDSSSRSLGVFTRSEFMGLVLNSTSNHLRLEFNTNGSDTAQGFQLTYTSFDLVKCEDPGIPNYGYRIRDDGHFTDTVVLYSCNPGYAMHGSSTLTCLSGDRRVWDKPMPSCVAECGGLVHAATSGRILSPGYPAPYDNNLHCTWTIEADPGKTISLHFIVFDTETAHDILKVWDGPVDSNILLKEWSGSALPEDIHSTFNSLTLQFDSDFFISKSGFSIQFSTSIASTCNDPGMPQNGTRYGDSREPGDTITFQCDPGYQLQGPAKITCVQLNNRFFWQPDPPSCIAACGGNLTGPAGVILSPNYPQPYPPGKECDWRIKVNPDFVIALIFKSFSMEPSYDFLHIYEGEDSNSPLIGSFQGSQAPERIESSGNSLFLAFRSDASVGLSGFAIEFKEKPREACFDPGNIMNGTRIGTDFKLGSTVTYQCDSGYKIVDPSSIECVTGADGKPSWDRALPACQAPCGGQYTGSEGVVLSPNYPHNYTAGQMCIYSITVPKEFVVFGQFAYFQTALNDLAELFDGTHPQARLLSSLSGSHSGETLPLATSNQILLRFSAKSGASARGFHFVYQAVPRTSDTQCSSVPEPRYGRRIGSEFSAGSIVRFECNPGYLLQGSTAIRCQSVPNALAQWNDTIPSCVVPCSGNFTQRRGTILSPGYPEPYGNNLNCVWKIIVSEGSGIQIQVISFATEQNWDSLEIHDGGDMTAPRLGSFSGTTVPALLNSTSNQLCLHFQSDISVAAAGFHLEYKTVGLAACQEPALPSNGIKIGDRYMVNDVLSFQCEPGYTLQGRSHISCMPGTVRRWNYPSPLCIATCGGTLTSMSGVILSPGFPGSYPNNLDCTWKISLPIGYGAHIQFLNFSTEANHDYLEIQNGPYHSSPMMGQFSGPDLPTSLLSTTHETLIRFYSDHSQNRQGFKLSYQAYELQNCPDPPAFQNGFMINSDYSVGQSISFECYPGYILLGHPVLTCQHGTDRNWNYPFPRCDAPCGYNVTSQNGTIYSPGFPDEYPILKDCLWLVTVPPGHGVYINFTLLQTEAVNDYIAVWDGPDQNSPQLGVFSGNTALETAYSSTNQVLLKFHSDFSNGGFFVLNFHAFQLKRCPPPPAVPQADLLTEDEDFEIGDFVKYQCHPGYTLLGSDTLTCKLSSQLLFQGSPPTCEAQCPANEVRTESSGVILSPGYPGNYFNSQTCAWSIKVEPNFNITLFVDTFQSEKQFDALEVFDGSSGQSPLLVVLSGNHTEQSNFTSRSNHLYLRWSTDHATSKKGFKIRYAAPYCSLTSTLRNGGILNKTAGAVGSKVHYFCKPGYRMIGHSNATCRRNPVGVYQWDSMAPLCQAVSCGIPEAPGNGSFTGNEFTLDSKVTYECNEGFKLDASQEATTVCQEDGLWSNRGKPPTCKPVPCPSIEGQLSEHVLWRLVSGSLNEYGAQVLLSCSPGYFLQGQRLLQCQANGTWSTEEDRPRCKVISCGSLSFPPNGNKIGTLTIYGATAIFTCNTGYTLVGSHVRECLANGLWSGSETRCLAGHCGSPDPIVNGHISGDGFSYRDTVVYQCNPGFRLVGTSVRICLQDHKWSGQTPVCVPITCGHPGNPAHGLTNGTEFNLNDLVNFTCHTGYRLQGASRAQCRSNGQWSSPLPICRVVNCSDPGSVENAVRHGQQNFPESFEYGTSVMYHCKTGFYLLGSSALTCMASGLWDRSLPKCLAISCGHPGVPANAVLTGELFTYGATVQYSCKGGQILTGNSTRVCQEDSHWSGSLPHCSGNSPGFCGDPGTPAHGSRLGDEFKTKSLLRFSCEMGHQLRGSAERTCLVNGSWSGVQPVCEAVSCGNPGTPTNGMILSSDGILFSSSVIYACWEGYKTSGLMTRHCTANGTWTGTAPDCTIISCGDPGTLPNGIQFGTDFTFNKTVSYQCNPGYLMEPPTSPTIRCTKDGTWNQSRPLCKAVLCNQPPPVPNGKVEGSDFRWGASISYSCVDGYQLSHSAILSCEGRGVWKGEVPQCLPVFCGDPGTPAEGRLSGKSFTFKSEVFIQCKPPFVLVGSSRRTCQADGIWSGIQPTCIDPAHTACPDPGTPHFGIQNSSKGYEVGSTVFFRCRKGYHIQGSTTRTCLANLTWSGIQTECIPHACRQPETPAHADVRAIDLPAFGYTLVYTCHPGFFLAGGSEHRTCKADMKWTGKSPVCKSKGVREVNETVTKTPVPSDVFFINSVWKGYYEYLGKRQPATLTVDWFNATSSKVNATFTAASRVQLELTGVYKKEEAHLLLKAFHIKGPADIFVSKFENDNWGLDGYVSSGLERGGFSFQGDIHGKDFGKFKLERQDPSNSDADSSNHYQGTSSGSVAAAILVPFFALILSGFAFYLYKHRTRPKVQYNGYAGHENSNGQASFENPMYDTNLKPTEAKAVRFDTTLNTVCTVV.

The first 29 residues, 1–29, serve as a signal peptide directing secretion; the sequence is MTAWRKFKSLLLPLVLAVLCAGLLTAAKG. Residues 30–3487 lie on the Extracellular side of the membrane; that stretch reads QNCGGLVQGP…NHYQGTSSGS (3458 aa). 10 cysteine pairs are disulfide-bonded: Cys32–Cys58, Cys145–Cys185, Cys171–Cys202, Cys208–Cys234, Cys349–Cys389, Cys375–Cys406, Cys411–Cys437, Cys527–Cys567, Cys553–Cys580, and Cys584–Cys610. The 109-residue stretch at 32-140 folds into the CUB 1 domain; it reads CGGLVQGPNG…QGFKAMYEVL (109 aa). 2 N-linked (GlcNAc...) asparagine glycosylation sites follow: Asn40 and Asn57. One can recognise a Sushi 1 domain in the interval 143 to 204; the sequence is HTCGNPGEIL…WDFPAPFCRA (62 aa). The region spanning 208–312 is the CUB 2 domain; sequence CGGTLRGTSG…KGFNAQFQVK (105 aa). The Sushi 2 domain occupies 347-408; that stretch reads DMCPDPGIPD…WNDHRPICRA (62 aa). The 112-residue stretch at 411–522 folds into the CUB 3 domain; it reads CGSNLRGPSG…PGFKAVYQEI (112 aa). The region spanning 525–582 is the Sushi 3 domain; sequence GGCGDPGIPAYGKRTGSSFLHGDTLTFECQAAFELVGERVITCQKNNQWSGNKPSCVF. One can recognise a CUB 4 domain in the interval 584 to 692; that stretch reads CFFNFTAPSG…RGFNITYTTF (109 aa). Residues Asn587 and Asn686 are each glycosylated (N-linked (GlcNAc...) asparagine). Positions 695–756 constitute a Sushi 4 domain; sequence NECHDPGIPV…WSSTVPRCEA (62 aa). Intrachain disulfides connect Cys697–Cys738, Cys723–Cys754, Cys758–Cys784, Cys873–Cys913, Cys899–Cys926, and Cys930–Cys956. Positions 758–866 constitute a CUB 5 domain; that stretch reads CGGHLTASSG…VGFLIHYESV (109 aa). The 58-residue stretch at 871–928 folds into the Sushi 5 domain; it reads DSCLDPGIPVNGQRHGSNFGIRSTVTFSCDPGYTLSDDEPLVCEKNHQWNHALPSCDA. The 111-residue stretch at 930 to 1040 folds into the CUB 6 domain; the sequence is CGGYIHGKSG…EGFNITFAEY (111 aa). Residues Asn955, Asn1015, and Asn1034 are each glycosylated (N-linked (GlcNAc...) asparagine). The 60-residue stretch at 1043–1102 folds into the Sushi 6 domain; it reads EPCDDPGVPAFSRRIGFQFGVGDTLAFTCFQGYRLEGATKLTCLGGGRRVWSAPLPRCVA. Cystine bridges form between Cys1045–Cys1085, Cys1071–Cys1100, and Cys1104–Cys1130. One can recognise a CUB 7 domain in the interval 1104-1212; the sequence is CGASVKGNEG…QGFQLTYTSF (109 aa). N-linked (GlcNAc...) asparagine glycosylation is found at Asn1184 and Asn1197. A Sushi 7 domain is found at 1215–1275; sequence VKCEDPGIPN…WDKPMPSCVA (61 aa). Disulfide bonds link Cys1217-Cys1258, Cys1244-Cys1273, Cys1277-Cys1304, Cys1391-Cys1431, Cys1417-Cys1447, Cys1451-Cys1477, Cys1564-Cys1604, Cys1590-Cys1621, Cys1625-Cys1651, Cys1741-Cys1781, Cys1767-Cys1798, and Cys1802-Cys1828. One can recognise a CUB 8 domain in the interval 1277–1386; it reads CGGLVHAATS…SGFSIQFSTS (110 aa). A Sushi 8 domain is found at 1389-1449; the sequence is STCNDPGMPQ…WQPDPPSCIA (61 aa). An N-linked (GlcNAc...) asparagine glycan is attached at Asn1399. A CUB 9 domain is found at 1451-1559; the sequence is CGGNLTGPAG…SGFAIEFKEK (109 aa). 2 N-linked (GlcNAc...) asparagine glycosylation sites follow: Asn1454 and Asn1572. Positions 1562 to 1623 constitute a Sushi 9 domain; it reads EACFDPGNIM…WDRALPACQA (62 aa). The CUB 10 domain occupies 1625 to 1733; sequence CGGQYTGSEG…RGFHFVYQAV (109 aa). Asn1644 carries an N-linked (GlcNAc...) asparagine glycan. One can recognise a Sushi 10 domain in the interval 1739-1800; it reads TQCSSVPEPR…WNDTIPSCVV (62 aa). N-linked (GlcNAc...) asparagine glycans are attached at residues Asn1792, Asn1805, and Asn1882. Residues 1802–1910 form the CUB 11 domain; the sequence is CSGNFTQRRG…AGFHLEYKTV (109 aa). Residues 1913–1972 form the Sushi 11 domain; that stretch reads AACQEPALPSNGIKIGDRYMVNDVLSFQCEPGYTLQGRSHISCMPGTVRRWNYPSPLCIA. Disulfide bonds link Cys1915–Cys1955, Cys1941–Cys1970, and Cys1974–Cys2000. In terms of domain architecture, CUB 12 spans 1974 to 2082; the sequence is CGGTLTSMSG…QGFKLSYQAY (109 aa). Residue Asn2018 is glycosylated (N-linked (GlcNAc...) asparagine). Positions 2085-2144 constitute a Sushi 12 domain; it reads QNCPDPPAFQNGFMINSDYSVGQSISFECYPGYILLGHPVLTCQHGTDRNWNYPFPRCDA. 3 disulfides stabilise this stretch: Cys2087–Cys2127, Cys2113–Cys2142, and Cys2146–Cys2172. The CUB 13 domain occupies 2146-2257; that stretch reads CGYNVTSQNG…LNFHAFQLKR (112 aa). Residues Asn2149, Asn2154, and Asn2187 are each glycosylated (N-linked (GlcNAc...) asparagine). Residues 2256 to 2317 enclose the Sushi 13 domain; it reads KRCPPPPAVP…FQGSPPTCEA (62 aa). 3 cysteine pairs are disulfide-bonded: Cys2258–Cys2300, Cys2286–Cys2315, and Cys2319–Cys2347. Residues 2319-2430 enclose the CUB 14 domain; it reads CPANEVRTES…KGFKIRYAAP (112 aa). Residues Asn2358, Asn2394, Asn2400, Asn2445, Asn2470, and Asn2503 are each glycosylated (N-linked (GlcNAc...) asparagine). Sushi domains follow at residues 2430-2492, 2493-2554, 2555-2619, 2620-2677, 2678-2735, 2736-2793, 2794-2856, 2857-2914, 2918-2975, 2976-3034, 3035-3094, 3095-3152, 3153-3210, 3214-3272, and 3273-3332; these read PYCS…LCQA, VSCG…TCKP, VPCP…RCKV, ISCG…RCLA, GHCG…VCVP, ITCG…ICRV, VNCS…KCLA, ISCG…HCSG, GFCG…VCEA, VSCG…DCTI, ISCG…LCKA, VLCN…QCLP, VFCG…TCID, TACP…ECIP, and HACR…VCKS. 12 disulfide bridges follow: Cys2432-Cys2473, Cys2459-Cys2490, Cys2495-Cys2537, Cys2521-Cys2552, Cys2557-Cys2602, Cys2588-Cys2617, Cys2622-Cys2662, Cys2648-Cys2675, Cys2680-Cys2720, Cys2706-Cys2733, Cys2738-Cys2778, and Cys2764-Cys2791. An N-linked (GlcNAc...) asparagine glycan is attached at Asn2605. N-linked (GlcNAc...) asparagine glycans are attached at residues Asn2750 and Asn2761. N-linked (GlcNAc...) asparagine glycosylation is present at Asn2795. Intrachain disulfides connect Cys2796-Cys2841, Cys2827-Cys2854, Cys2859-Cys2899, Cys2885-Cys2912, Cys2920-Cys2960, Cys2946-Cys2973, Cys2978-Cys3019, Cys3005-Cys3032, Cys3037-Cys3079, Cys3063-Cys3092, Cys3097-Cys3137, Cys3123-Cys3150, Cys3155-Cys3195, Cys3181-Cys3208, Cys3216-Cys3257, Cys3243-Cys3270, Cys3275-Cys3317, and Cys3302-Cys3330. N-linked (GlcNAc...) asparagine glycosylation occurs at Asn2894. Asn2963 is a glycosylation site (N-linked (GlcNAc...) asparagine). Asn3022, Asn3056, and Asn3086 each carry an N-linked (GlcNAc...) asparagine glycan. Residues Asn3228 and Asn3260 are each glycosylated (N-linked (GlcNAc...) asparagine). Residues Asn3339, Asn3379, and Asn3386 are each glycosylated (N-linked (GlcNAc...) asparagine). A helical transmembrane segment spans residues 3488 to 3508; the sequence is VAAAILVPFFALILSGFAFYL. Residues 3509–3564 are Cytoplasmic-facing; the sequence is YKHRTRPKVQYNGYAGHENSNGQASFENPMYDTNLKPTEAKAVRFDTTLNTVCTVV.

The protein belongs to the CSMD family.

It is found in the membrane. This Mus musculus (Mouse) protein is CUB and sushi domain-containing protein 1 (Csmd1).